A 46-amino-acid polypeptide reads, in one-letter code: MWRLWKLYDPRRVLIGIFSWLAVLALVIHFILLSTDRFNWVGGAAN.

Topologically, residues 1–12 are cytoplasmic; that stretch reads MWRLWKLYDPRR. The chain crosses the membrane as a helical span at residues 13–33; the sequence is VLIGIFSWLAVLALVIHFILL. His-29 is a binding site for a bacteriochlorophyll. Over 34–46 the chain is Periplasmic; sequence STDRFNWVGGAAN.

Belongs to the antenna complex alpha subunit family. In terms of assembly, the core complex is formed by different alpha and beta chains, binding bacteriochlorophyll molecules, and arranged most probably in tetrameric structures disposed around the reaction center. The non-pigmented gamma chains may constitute additional components.

The protein localises to the cell inner membrane. In terms of biological role, antenna complexes are light-harvesting systems, which transfer the excitation energy to the reaction centers. This is Light-harvesting protein B800/850/890 alpha-1 chain from Halorhodospira halophila (strain DSM 244 / SL1) (Ectothiorhodospira halophila (strain DSM 244 / SL1)).